The primary structure comprises 542 residues: Phosphoenolpyruvate carboxykinase (ATP) (542 aa).

Substrate contacts are provided by arginine 67, tyrosine 208, and lysine 214. ATP contacts are provided by residues lysine 214, histidine 233, and 249 to 257; that span reads GLSGTGKTT. The Mn(2+) site is built by lysine 214 and histidine 233. Aspartate 270 serves as a coordination point for Mn(2+). Residues glutamate 298, arginine 334, 450 to 451, and threonine 456 each bind ATP; that span reads RI. Arginine 334 is a substrate binding site.

It belongs to the phosphoenolpyruvate carboxykinase (ATP) family. Monomer. Mn(2+) serves as cofactor.

It is found in the cytoplasm. The catalysed reaction is oxaloacetate + ATP = phosphoenolpyruvate + ADP + CO2. The protein operates within carbohydrate biosynthesis; gluconeogenesis. Functionally, involved in the gluconeogenesis. Catalyzes the conversion of oxaloacetate (OAA) to phosphoenolpyruvate (PEP) through direct phosphoryl transfer between the nucleoside triphosphate and OAA. This is Phosphoenolpyruvate carboxykinase (ATP) from Vibrio vulnificus (strain CMCP6).